Reading from the N-terminus, the 250-residue chain is Triosephosphate isomerase (250 aa).

9-11 lines the substrate pocket; it reads NWK. His-96 serves as the catalytic Electrophile. Catalysis depends on Glu-166, which acts as the Proton acceptor. Substrate contacts are provided by residues Gly-172, Ser-212, and 233–234; that span reads GG.

This sequence belongs to the triosephosphate isomerase family. Homodimer.

The protein localises to the cytoplasm. It carries out the reaction D-glyceraldehyde 3-phosphate = dihydroxyacetone phosphate. Its pathway is carbohydrate biosynthesis; gluconeogenesis. It participates in carbohydrate degradation; glycolysis; D-glyceraldehyde 3-phosphate from glycerone phosphate: step 1/1. In terms of biological role, involved in the gluconeogenesis. Catalyzes stereospecifically the conversion of dihydroxyacetone phosphate (DHAP) to D-glyceraldehyde-3-phosphate (G3P). The sequence is that of Triosephosphate isomerase from Chlorobium phaeovibrioides (strain DSM 265 / 1930) (Prosthecochloris vibrioformis (strain DSM 265)).